We begin with the raw amino-acid sequence, 496 residues long: Membrane-bound lytic murein transglycosylase F (496 aa).

An N-terminal signal peptide occupies residues 1–31 (MPIFSTRVLTYLRCIFRLFIGLMLLLTLVGC). A non-LT domain region spans residues 32–271 (DFYTPSSQLE…KLDEKYFGHV (240 aa)). An LT domain region spans residues 273 to 496 (NFDFVDTRTF…AEVVKQITLR (224 aa)). Glu316 is an active-site residue. A disordered region spans residues 464–485 (HRREELDEDDSSEPQSTERPTV).

This sequence in the N-terminal section; belongs to the bacterial solute-binding protein 3 family. It in the C-terminal section; belongs to the transglycosylase Slt family.

The protein localises to the cell outer membrane. It carries out the reaction Exolytic cleavage of the (1-&gt;4)-beta-glycosidic linkage between N-acetylmuramic acid (MurNAc) and N-acetylglucosamine (GlcNAc) residues in peptidoglycan, from either the reducing or the non-reducing ends of the peptidoglycan chains, with concomitant formation of a 1,6-anhydrobond in the MurNAc residue.. Murein-degrading enzyme that degrades murein glycan strands and insoluble, high-molecular weight murein sacculi, with the concomitant formation of a 1,6-anhydromuramoyl product. Lytic transglycosylases (LTs) play an integral role in the metabolism of the peptidoglycan (PG) sacculus. Their lytic action creates space within the PG sacculus to allow for its expansion as well as for the insertion of various structures such as secretion systems and flagella. This chain is Membrane-bound lytic murein transglycosylase F, found in Aeromonas salmonicida (strain A449).